A 278-amino-acid polypeptide reads, in one-letter code: Orotidine 5'-phosphate decarboxylase (278 aa).

The Proton donor role is filled by Lys-96.

Belongs to the OMP decarboxylase family. Type 2 subfamily.

The catalysed reaction is orotidine 5'-phosphate + H(+) = UMP + CO2. Its pathway is pyrimidine metabolism; UMP biosynthesis via de novo pathway; UMP from orotate: step 2/2. The chain is Orotidine 5'-phosphate decarboxylase from Salinispora arenicola (strain CNS-205).